The sequence spans 765 residues: Protein transport protein Sec23A (765 aa).

Zn(2+) contacts are provided by Cys61, Cys66, Cys85, and Cys88. One copy of the Gelsolin-like repeat lies at 632 to 718 (PEPVLLDSSS…EHGGSQARFL (87 aa)).

This sequence belongs to the SEC23/SEC24 family. SEC23 subfamily. COPII is composed of at least five proteins: the Sec23/24 complex, the Sec13/31 complex and Sar1.

It is found in the cytoplasmic vesicle. The protein localises to the COPII-coated vesicle membrane. It localises to the endoplasmic reticulum membrane. Its subcellular location is the cytoplasm. The protein resides in the cytosol. Its function is as follows. Component of the coat protein complex II (COPII) which promotes the formation of transport vesicles from the endoplasmic reticulum (ER). The coat has two main functions, the physical deformation of the endoplasmic reticulum membrane into vesicles and the selection of cargo molecules for their transport to the Golgi complex. The protein is Protein transport protein Sec23A of Danio rerio (Zebrafish).